A 404-amino-acid chain; its full sequence is Glucose-1-phosphate adenylyltransferase (404 aa).

Residues Tyr99, Gly164, 179–180, and Ser197 contribute to the alpha-D-glucose 1-phosphate site; that span reads EK.

It belongs to the bacterial/plant glucose-1-phosphate adenylyltransferase family.

The enzyme catalyses alpha-D-glucose 1-phosphate + ATP + H(+) = ADP-alpha-D-glucose + diphosphate. The protein operates within capsule biogenesis; capsule polysaccharide biosynthesis. It participates in glycan biosynthesis; glycogen biosynthesis. In terms of biological role, involved in the biosynthesis of ADP-glucose, a building block, required in the biosynthesis of maltose-1-phosphate (M1P) and in the elongation reactions to produce linear alpha-1,4-glucans. Catalyzes the reaction between ATP and alpha-D-glucose 1-phosphate (G1P) to produce pyrophosphate and ADP-Glc. In Mycobacterium leprae (strain Br4923), this protein is Glucose-1-phosphate adenylyltransferase.